We begin with the raw amino-acid sequence, 400 residues long: Zinc finger CCHC domain-containing protein 3 (400 aa).

The tract at residues 1–157 is disordered; it reads MATGGGAEEE…LQDEPPAAGP (157 aa). Basic and acidic residues-rich tracts occupy residues 26–38 and 47–63; these read ARVE…REKM and LAEK…RDET. Positions 66–75 are enriched in gly residues; it reads GASGGLGSPG. Positions 91 to 109 are enriched in basic and acidic residues; that stretch reads GDPKGRRRDPTGEASDAYR. Y198 carries the phosphotyrosine modification. CCHC-type zinc fingers lie at residues 349 to 365 and 369 to 384; these read RCFR…YCRK and CNLC…QCPK.

In terms of assembly, interacts with CGAS. Interacts with RIGI. Interacts with IFIH1/MDA5.

It is found in the cytoplasm. Its function is as follows. Nucleic acid-binding protein involved in innate immune response to DNA and RNA viruses. Binds DNA and RNA in the cytoplasm and acts by promoting recognition of viral nucleic acids by virus sensors, such as RIGI, IFIH1/MDA5 and CGAS. Acts as a co-sensor for recognition of double-stranded DNA (dsDNA) by cGAS in the cytoplasm, thereby playing a role in innate immune response to cytosolic dsDNA and DNA virus. Binds dsDNA and probably acts by promoting sensing of dsDNA by CGAS, leading to enhance CGAS oligomerization and activation. Promotes sensing of viral RNA by RIG-I-like receptors proteins RIGI and IFIH1/MDA5 via two mechanisms: binds double-stranded RNA (dsRNA), enhancing the binding of RIGI and IFIH1/MDA5 to dsRNA and promotes 'Lys-63'-linked ubiquitination and subsequent activation of RIGI and IFIH1/MDA5. The protein is Zinc finger CCHC domain-containing protein 3 of Mus musculus (Mouse).